Here is a 164-residue protein sequence, read N- to C-terminus: Transcription elongation factor GreA (164 aa).

Positions 50 to 76 (YHAAREEQGQQEARIRQLQELLNNAKV) form a coiled coil.

This sequence belongs to the GreA/GreB family.

In terms of biological role, necessary for efficient RNA polymerase transcription elongation past template-encoded arresting sites. The arresting sites in DNA have the property of trapping a certain fraction of elongating RNA polymerases that pass through, resulting in locked ternary complexes. Cleavage of the nascent transcript by cleavage factors such as GreA or GreB allows the resumption of elongation from the new 3'terminus. GreA releases sequences of 2 to 3 nucleotides. This Mycobacteroides abscessus (strain ATCC 19977 / DSM 44196 / CCUG 20993 / CIP 104536 / JCM 13569 / NCTC 13031 / TMC 1543 / L948) (Mycobacterium abscessus) protein is Transcription elongation factor GreA.